The following is an 804-amino-acid chain: Leucine--tRNA ligase (804 aa).

Positions 40-51 (PYPSGAGLHVGH) match the 'HIGH' region motif. The short motif at 576-580 (KMSKS) is the 'KMSKS' region element. ATP is bound at residue Lys579.

The protein belongs to the class-I aminoacyl-tRNA synthetase family.

The protein resides in the cytoplasm. It carries out the reaction tRNA(Leu) + L-leucine + ATP = L-leucyl-tRNA(Leu) + AMP + diphosphate. This Staphylococcus aureus (strain Mu3 / ATCC 700698) protein is Leucine--tRNA ligase.